Reading from the N-terminus, the 188-residue chain is Protein YecM (188 aa).

To H.influenzae HI_1582/HI_1581.

This Escherichia coli (strain K12) protein is Protein YecM (yecM).